Reading from the N-terminus, the 352-residue chain is Fc receptor-like A (352 aa).

The signal sequence occupies residues 1-30 (MKLSCTLTQWALYVCPAVLLATQMLLAASS). Residues 46 to 65 (CQAAAEEDEGDEDDGDMTQS) are disordered. Over residues 50-61 (AEEDEGDEDDGD) the composition is skewed to acidic residues. 2 consecutive Ig-like C2-type domains span residues 80–169 (PFHL…EAAS) and 182–260 (PVLK…RQIS). Intrachain disulfides connect cysteine 109–cysteine 153 and cysteine 202–cysteine 250. The interval 275–310 (KPTASETPPTEALGPLPPPPASSAEQPRFSSPDPHL) is disordered.

As to quaternary structure, monomer or homodimer; disulfide-linked. Highly expressed in spleen. Expressed in immature B-cell and B-cell lines.

The protein localises to the cytoplasm. May be implicated in B-cell differentiation and lymphomagenesis. In Mus musculus (Mouse), this protein is Fc receptor-like A (Fcrla).